The primary structure comprises 552 residues: Lon protease 2 (552 aa).

97-104 serves as a coordination point for ATP; sequence GPPGVGKT. The 187-residue stretch at 349-535 folds into the Lon proteolytic domain; the sequence is EPQVGIVNGL…QEVLDEILVN (187 aa). Catalysis depends on residues S445 and K488.

The protein belongs to the peptidase S16 family. As to quaternary structure, homohexamer. Organized in a ring with a central cavity.

It is found in the cytoplasm. It catalyses the reaction Hydrolysis of proteins in presence of ATP.. Functionally, ATP-dependent serine protease that mediates the selective degradation of mutant and abnormal proteins as well as certain short-lived regulatory proteins. Required for cellular homeostasis and for survival from DNA damage and developmental changes induced by stress. Degrades polypeptides processively to yield small peptide fragments that are 5 to 10 amino acids long. Binds to DNA in a double-stranded, site-specific manner. This chain is Lon protease 2 (lon2), found in Bacillus subtilis (strain 168).